The sequence spans 56 residues: Small ribosomal subunit protein uS14 (56 aa).

Zn(2+)-binding residues include C21, C24, C39, and C42.

Belongs to the universal ribosomal protein uS14 family. In terms of assembly, component of the 40S small ribosomal subunit. It depends on Zn(2+) as a cofactor.

The protein resides in the cytoplasm. It is found in the cytosol. It localises to the rough endoplasmic reticulum. This chain is Small ribosomal subunit protein uS14 (RpS29), found in Culex quinquefasciatus (Southern house mosquito).